The chain runs to 470 residues: MSHKSDLIATNIQKYLQQHQQKELLRFITCGSVDDGKSTLIGRLLHDSKLIFEDQLASIVADSKKVGTQGDRLDLALLVDGLQSEREQGITIDVAYRYFSTDKRKFIIADTPGHEQYTRNMATGASNCDLAIILIDARKGLQTQTRRHNFICSLLGIKHVIVAVNKMDTVGYSQQIYKSIQDEYLKLAGSLQIPDIRFVPISALDGDNVVSKSPKMPWFRGSPLMHYLETIKIDYAYTDEFRFPVQLVCRPNSEFRGFQGTVVSGSAKIGDTIRVMPSGKITTIKSILSFDGKLNEAEAGQSITITTYDEIDISRGDMIVHKDAISHVSSMLRANIVWMSEQPLIEYKDYYIKFLTKQVIGSVNKFNYKTDINTLKEVACGTLELNEIATIELKLSEPVCFDSYQKNRTIGAFIIIDRLTNVTAGAGMVIKPLAANDKKDSTNDYSEFELELNALIRKHFPHWDAKNLRE.

The tr-type G domain occupies 22-238 (KELLRFITCG…ETIKIDYAYT (217 aa)). Residues 31 to 38 (GSVDDGKS) are G1. 31–38 (GSVDDGKS) provides a ligand contact to GTP. Residues 89 to 93 (GITID) form a G2 region. Residues 110-113 (DTPG) form a G3 region. GTP is bound by residues 110–114 (DTPGH) and 165–168 (NKMD). Residues 165–168 (NKMD) form a G4 region. Residues 202-204 (SAL) form a G5 region.

Belongs to the TRAFAC class translation factor GTPase superfamily. Classic translation factor GTPase family. CysN/NodQ subfamily. Heterodimer composed of CysD, the smaller subunit, and CysN.

It carries out the reaction sulfate + ATP + H(+) = adenosine 5'-phosphosulfate + diphosphate. The protein operates within sulfur metabolism; hydrogen sulfide biosynthesis; sulfite from sulfate: step 1/3. Functionally, with CysD forms the ATP sulfurylase (ATPS) that catalyzes the adenylation of sulfate producing adenosine 5'-phosphosulfate (APS) and diphosphate, the first enzymatic step in sulfur assimilation pathway. APS synthesis involves the formation of a high-energy phosphoric-sulfuric acid anhydride bond driven by GTP hydrolysis by CysN coupled to ATP hydrolysis by CysD. This chain is Sulfate adenylyltransferase subunit 1, found in Francisella tularensis subsp. tularensis (strain SCHU S4 / Schu 4).